A 272-amino-acid chain; its full sequence is Putative hydro-lyase AZC_4080 (272 aa).

This sequence belongs to the D-glutamate cyclase family.

The chain is Putative hydro-lyase AZC_4080 from Azorhizobium caulinodans (strain ATCC 43989 / DSM 5975 / JCM 20966 / LMG 6465 / NBRC 14845 / NCIMB 13405 / ORS 571).